The sequence spans 192 residues: UPF0149 protein KPN78578_32810 (192 aa).

This sequence belongs to the UPF0149 family.

In Klebsiella pneumoniae subsp. pneumoniae (strain ATCC 700721 / MGH 78578), this protein is UPF0149 protein KPN78578_32810.